The chain runs to 334 residues: Glyoxylate reductase (334 aa).

NADP(+)-binding positions include 158-161 (LGRI), 180-182 (SRT), and 239-241 (IAR). Catalysis depends on residues arginine 241 and glutamate 270. The active-site Proton donor is the histidine 288. 288-290 (HIG) contributes to the NADP(+) binding site.

It belongs to the D-isomer specific 2-hydroxyacid dehydrogenase family. GyaR subfamily. Homodimer.

The protein localises to the cytoplasm. The catalysed reaction is glycolate + NAD(+) = glyoxylate + NADH + H(+). The chain is Glyoxylate reductase (gyaR) from Pyrococcus horikoshii (strain ATCC 700860 / DSM 12428 / JCM 9974 / NBRC 100139 / OT-3).